The sequence spans 124 residues: Profilin-2 (124 aa).

It belongs to the profilin family. In terms of assembly, occurs in many kinds of cells as a complex with monomeric actin in a 1:1 ratio. Interacts with forH.

The protein resides in the cytoplasm. Its subcellular location is the cytoskeleton. In terms of biological role, binds to actin and affects the structure of the cytoskeleton. At high concentrations, profilin prevents the polymerization of actin, whereas it enhances it at low concentrations. By binding to PIP2, it inhibits the formation of IP3 and DG. The sequence is that of Profilin-2 (proB) from Dictyostelium discoideum (Social amoeba).